Reading from the N-terminus, the 400-residue chain is Bifunctional arginine demethylase and lysyl-hydroxylase psr-1 (400 aa).

One can recognise a JmjC domain in the interval 146-310; the sequence is RKTKKLSEDY…LVWPKTVKGR (165 aa). Thr189 is a binding site for substrate. Residues His192 and Asp194 each contribute to the Fe cation site. Residue Asn202 coordinates 2-oxoglutarate. Lys209 contributes to the substrate binding site. Fe cation is bound at residue His278. Thr290 contacts 2-oxoglutarate. The tract at residues 342 to 400 is disordered; it reads DMNESSSDSSSSSSSSDDSSDESDCDDSGRCGGRKRKNDDRSNECPEKMSTTYFQNSLV. Residues 346-358 are compositionally biased toward low complexity; it reads SSSDSSSSSSSSD. The span at 378 to 388 shows a compositional bias: basic and acidic residues; sequence KNDDRSNECPE. Residues 390 to 400 are compositionally biased toward polar residues; it reads MSTTYFQNSLV.

Belongs to the JMJD6 family. As to quaternary structure, interacts with ced-5 and ced-12. It depends on Fe(2+) as a cofactor.

The protein resides in the nucleus. In terms of biological role, dioxygenase that can both act as a histone arginine demethylase and a lysyl-hydroxylase. This is Bifunctional arginine demethylase and lysyl-hydroxylase psr-1 (psr-1) from Caenorhabditis elegans.